We begin with the raw amino-acid sequence, 521 residues long: 7-deoxyloganic acid hydroxylase (521 aa).

A helical membrane pass occupies residues 8 to 28 (IIFLVFVSLTLYWVYRILDWV). N-linked (GlcNAc...) asparagine glycosylation is found at Asn107 and Asn311. A heme-binding site is contributed by Cys469.

This sequence belongs to the cytochrome P450 family. In terms of tissue distribution, mostly present in actively growing aerial organs, including leaves, flower buds and stems, and, to a lower extent, in mature leaves, roots and opened flowers. Expressed in the leaf internal phloem-associated parenchyma (IPAP) inside the mesophyll.

It localises to the endoplasmic reticulum membrane. The enzyme catalyses 7-deoxyloganate + reduced [NADPH--hemoprotein reductase] + O2 = loganate + oxidized [NADPH--hemoprotein reductase] + H2O + H(+). Its pathway is alkaloid biosynthesis. Its function is as follows. Component of the seco-iridoid and derivatives monoterpenoid indole alkaloids (MIAs, e.g. vincristine, quinine, and strychnine) biosynthesis pathway. Catalyzes the conversion of 7-deoxyloganic acid into loganic acid. Not active on 7-deoxyloganetic acid. The chain is 7-deoxyloganic acid hydroxylase from Catharanthus roseus (Madagascar periwinkle).